The primary structure comprises 595 residues: TNF receptor-associated factor family protein DDB_G0272348 (595 aa).

A disordered region spans residues 14–64 (SFTNNNSNNNNNNNNNSNSNNNNNNNNNNINNNNNHNNNNKNNSNNKNEIN). Low complexity predominate over residues 17–64 (NNNSNNNNNNNNNSNSNNNNNNNNNNINNNNNHNNNNKNNSNNKNEIN). An RING-type; degenerate zinc finger spans residues 87 to 134 (CTICSDLLVNSFHADKFKAVQCKNGHYTTCLNCWEKHLEKKKNCIQCG). TRAF-type zinc fingers lie at residues 189–253 (EHLK…INKE) and 254–311 (SHNA…SKLS). The stretch at 348–410 (LLNGQNKKIT…QQQQSQQQQQ (63 aa)) forms a coiled coil. Residues 409–440 (QQSQQQQQSQQSQQNNNSNSHFINNNNNNINN) show a composition bias toward low complexity. Positions 409–450 (QQSQQQQQSQQSQQNNNSNSHFINNNNNNINNVQMSDSPNGG) are disordered. Residues 441–450 (VQMSDSPNGG) show a composition bias toward polar residues. The MATH domain maps to 456 to 584 (VYKNKWVISN…NDSITIEIEI (129 aa)).

The protein belongs to the TNF receptor-associated factor family. A subfamily.

The protein localises to the cytoplasm. Functionally, probable adapter protein and signal transducer that links members of the tumor necrosis factor receptor family to different signaling pathways by association with the receptor cytoplasmic domain and kinases. This chain is TNF receptor-associated factor family protein DDB_G0272348, found in Dictyostelium discoideum (Social amoeba).